A 395-amino-acid polypeptide reads, in one-letter code: 1-deoxy-D-xylulose 5-phosphate reductoisomerase (395 aa).

Residues Thr-10, Gly-11, Ser-12, Ile-13, Asn-38, and Asn-123 each coordinate NADPH. A 1-deoxy-D-xylulose 5-phosphate-binding site is contributed by Lys-124. NADPH is bound at residue Glu-125. Asp-149 serves as a coordination point for Mn(2+). The 1-deoxy-D-xylulose 5-phosphate site is built by Ser-150, Glu-151, Ser-185, and His-208. Glu-151 provides a ligand contact to Mn(2+). Gly-214 contributes to the NADPH binding site. Residues Ser-221, Asn-226, Lys-227, and Glu-230 each coordinate 1-deoxy-D-xylulose 5-phosphate. A Mn(2+)-binding site is contributed by Glu-230.

Belongs to the DXR family. The cofactor is Mg(2+). Requires Mn(2+) as cofactor.

It catalyses the reaction 2-C-methyl-D-erythritol 4-phosphate + NADP(+) = 1-deoxy-D-xylulose 5-phosphate + NADPH + H(+). Its pathway is isoprenoid biosynthesis; isopentenyl diphosphate biosynthesis via DXP pathway; isopentenyl diphosphate from 1-deoxy-D-xylulose 5-phosphate: step 1/6. Catalyzes the NADPH-dependent rearrangement and reduction of 1-deoxy-D-xylulose-5-phosphate (DXP) to 2-C-methyl-D-erythritol 4-phosphate (MEP). The sequence is that of 1-deoxy-D-xylulose 5-phosphate reductoisomerase from Shewanella woodyi (strain ATCC 51908 / MS32).